A 363-amino-acid polypeptide reads, in one-letter code: 3-isopropylmalate dehydrogenase (363 aa).

79–92 (GPKWEHLPPNDQPE) serves as a coordination point for NAD(+). Residues Arg100, Arg110, Arg139, and Asp228 each contribute to the substrate site. 3 residues coordinate Mg(2+): Asp228, Asp252, and Asp256. 286-298 (GSAPDIAGKNIAN) contacts NAD(+).

This sequence belongs to the isocitrate and isopropylmalate dehydrogenases family. LeuB type 1 subfamily. As to quaternary structure, homodimer. Mg(2+) is required as a cofactor. The cofactor is Mn(2+).

It is found in the cytoplasm. The catalysed reaction is (2R,3S)-3-isopropylmalate + NAD(+) = 4-methyl-2-oxopentanoate + CO2 + NADH. It functions in the pathway amino-acid biosynthesis; L-leucine biosynthesis; L-leucine from 3-methyl-2-oxobutanoate: step 3/4. Catalyzes the oxidation of 3-carboxy-2-hydroxy-4-methylpentanoate (3-isopropylmalate) to 3-carboxy-4-methyl-2-oxopentanoate. The product decarboxylates to 4-methyl-2 oxopentanoate. This chain is 3-isopropylmalate dehydrogenase, found in Aliivibrio fischeri (strain ATCC 700601 / ES114) (Vibrio fischeri).